A 967-amino-acid chain; its full sequence is Muscular LMNA-interacting protein (967 aa).

Ser-129 bears the Phosphoserine mark. Disordered stretches follow at residues Glu-132–Arg-154, Gly-302–Thr-336, Gln-432–Ser-462, Gly-506–His-628, Gln-644–Leu-685, Ser-786–Thr-838, and Phe-929–Glu-967. The segment at Pro-144–Thr-811 is required for interaction with ISL1. The span at Thr-437–Thr-455 shows a compositional bias: low complexity. Residues Thr-508–Phe-523 show a composition bias toward polar residues. The segment covering Val-528–Ser-541 has biased composition (low complexity). Positions Gly-543–Arg-556 are enriched in basic and acidic residues. Polar residues-rich tracts occupy residues Ile-558–Ser-567 and Gly-658–Leu-685. Ser-792 bears the Phosphoserine mark. A compositionally biased stretch (polar residues) spans Met-800–Thr-811. Residues Ser-826 to Ser-835 show a composition bias toward low complexity. Residues Ser-938–Tyr-947 are compositionally biased toward polar residues. Residues Pro-958–Glu-967 show a composition bias toward basic and acidic residues.

Directly interacts with LMNA. Interacts with ISL1 (via N-terminal domain); the interaction represses ISL1 transactivator activity. Interactions of ISL1 with MLIP1 and GCN5/KAT2A may be mutually exclusive. May be ubiquitinated by UBE3C ubiquitin ligase; ubiquitination is followed by protein degradation. In terms of tissue distribution, predominantly expressed in the heart and skeletal muscle, but detected at lower levels in the lung and brain (at protein level). Also detected in smooth muscle, thymus and kidney. In brain, expressed by a subpopulation of cells within the hippocampus and cortex. In heart, expressed by cardiomyocytes. Expression is reduced in hypertrophic hearts at the transcript level. However, expression in hypertrophic hearts induced by transverse aortic constriction do not differ from control at the protein level.

The protein localises to the nucleus. It localises to the nucleus envelope. Its subcellular location is the PML body. The protein resides in the cytoplasm. It is found in the cytosol. The protein localises to the cell membrane. It localises to the sarcolemma. Its function is as follows. Required for myoblast differentiation into myotubes, possibly acting as a transcriptional regulator of the myogenic program. Required for cardiac adaptation to stress through integrated regulation of the AKT/mTOR pathways and FOXO1. Regulates cardiac homeostasis and plays a role in the protection against cardiac hypertrophy. Binds chromatin. May act as a transcriptional cofactor for ISL1, repressing its transcriptional activity. May also repress MYOCD transcriptional activity. This chain is Muscular LMNA-interacting protein, found in Mus musculus (Mouse).